We begin with the raw amino-acid sequence, 85 residues long: uncharacterized protein (85 aa).

The first 20 residues, 1–20 (MIKLFCVLAAFISINSACQS), serve as a signal peptide directing secretion.

This is an uncharacterized protein from Invertebrate iridescent virus 6 (IIV-6).